A 521-amino-acid chain; its full sequence is CDP-diacylglycerol--glycerol-3-phosphate 3-phosphatidyltransferase (521 aa).

91-98 lines the ATP pocket; the sequence is ASLYLGKS. 2 PLD phosphodiesterase domains span residues 177–203 and 419–457; these read GLGL…SNDY and NGWS…TRRA. Catalysis depends on residues H182, K184, and D189.

The protein belongs to the CDP-alcohol phosphatidyltransferase class-II family.

The protein localises to the mitochondrion. The catalysed reaction is a CDP-1,2-diacyl-sn-glycerol + sn-glycerol 3-phosphate = a 1,2-diacyl-sn-glycero-3-phospho-(1'-sn-glycero-3'-phosphate) + CMP + H(+). The protein operates within phospholipid metabolism; phosphatidylglycerol biosynthesis; phosphatidylglycerol from CDP-diacylglycerol: step 1/2. Its function is as follows. Essential for the viability of mitochondrial petite mutant. Catalyzes the committed step to the synthesis of the acidic phospholipids. The polypeptide is CDP-diacylglycerol--glycerol-3-phosphate 3-phosphatidyltransferase (PGS1) (Saccharomyces cerevisiae (strain ATCC 204508 / S288c) (Baker's yeast)).